The chain runs to 208 residues: Small ribosomal subunit protein uS5 (208 aa).

Positions 28 to 91 (LEERLIYANR…EKAKKNVIRV (64 aa)) constitute an S5 DRBM domain.

This sequence belongs to the universal ribosomal protein uS5 family. In terms of assembly, part of the 30S ribosomal subunit. Contacts proteins S4 and S8.

With S4 and S12 plays an important role in translational accuracy. Its function is as follows. Located at the back of the 30S subunit body where it stabilizes the conformation of the head with respect to the body. This chain is Small ribosomal subunit protein uS5, found in Aquifex aeolicus (strain VF5).